Reading from the N-terminus, the 85-residue chain is Small ribosomal subunit protein uS17 (85 aa).

This sequence belongs to the universal ribosomal protein uS17 family. In terms of assembly, part of the 30S ribosomal subunit.

One of the primary rRNA binding proteins, it binds specifically to the 5'-end of 16S ribosomal RNA. The protein is Small ribosomal subunit protein uS17 of Ruminiclostridium cellulolyticum (strain ATCC 35319 / DSM 5812 / JCM 6584 / H10) (Clostridium cellulolyticum).